Here is a 323-residue protein sequence, read N- to C-terminus: Ribonuclease Z (323 aa).

Zn(2+)-binding residues include H62, H64, D66, H67, H144, D215, and H273. The Proton acceptor role is filled by D66.

Belongs to the RNase Z family. Homodimer. Zn(2+) serves as cofactor.

It catalyses the reaction Endonucleolytic cleavage of RNA, removing extra 3' nucleotides from tRNA precursor, generating 3' termini of tRNAs. A 3'-hydroxy group is left at the tRNA terminus and a 5'-phosphoryl group is left at the trailer molecule.. Zinc phosphodiesterase, which displays some tRNA 3'-processing endonuclease activity. Probably involved in tRNA maturation, by removing a 3'-trailer from precursor tRNA. The chain is Ribonuclease Z from Synechococcus sp. (strain WH7803).